The chain runs to 316 residues: Aspartate carbamoyltransferase catalytic subunit (316 aa).

Carbamoyl phosphate is bound by residues Arg66 and Thr67. Lys94 is an L-aspartate binding site. Residues Arg116, His146, and Gln149 each contribute to the carbamoyl phosphate site. 2 residues coordinate L-aspartate: Arg180 and Arg235. Residues Gly276 and Pro277 each contribute to the carbamoyl phosphate site.

The protein belongs to the aspartate/ornithine carbamoyltransferase superfamily. ATCase family. In terms of assembly, heterododecamer (2C3:3R2) of six catalytic PyrB chains organized as two trimers (C3), and six regulatory PyrI chains organized as three dimers (R2).

The catalysed reaction is carbamoyl phosphate + L-aspartate = N-carbamoyl-L-aspartate + phosphate + H(+). Its pathway is pyrimidine metabolism; UMP biosynthesis via de novo pathway; (S)-dihydroorotate from bicarbonate: step 2/3. In terms of biological role, catalyzes the condensation of carbamoyl phosphate and aspartate to form carbamoyl aspartate and inorganic phosphate, the committed step in the de novo pyrimidine nucleotide biosynthesis pathway. In Stenotrophomonas maltophilia (strain R551-3), this protein is Aspartate carbamoyltransferase catalytic subunit.